The following is a 230-amino-acid chain: U2 small nuclear ribonucleoprotein A' (230 aa).

LRR repeat units lie at residues 19 to 40, 41 to 62, and 65 to 86; these read KDRE…PFFP, RLRM…LANS, and GLTT…DPLR. Residues 99–137 form the LRRCT domain; it reads NPVTRKEYYRLWIIWRIPSVRFLDYQKVKDAERAKAAEL. The segment at 211–230 is disordered; that stretch reads GRIPGGALDGAGNDGDQMQL. Residues 213–223 show a composition bias toward gly residues; sequence IPGGALDGAGN.

It belongs to the U2 small nuclear ribonucleoprotein A family. Associated with the spliceosome.

The protein resides in the nucleus. In terms of biological role, involved in pre-mRNA splicing. The chain is U2 small nuclear ribonucleoprotein A' (lea1) from Emericella nidulans (strain FGSC A4 / ATCC 38163 / CBS 112.46 / NRRL 194 / M139) (Aspergillus nidulans).